Here is a 273-residue protein sequence, read N- to C-terminus: Shikimate dehydrogenase (NADP(+)) (273 aa).

Shikimate-binding positions include 15 to 17 (SKS) and Thr-62. The Proton acceptor role is filled by Lys-66. Glu-78 provides a ligand contact to NADP(+). Asn-87 and Asp-103 together coordinate shikimate. NADP(+) contacts are provided by residues 127-131 (GAGGA), 151-156 (NRTHDK), and Met-214. Position 216 (Tyr-216) interacts with shikimate. Gly-238 provides a ligand contact to NADP(+).

This sequence belongs to the shikimate dehydrogenase family. Homodimer.

It carries out the reaction shikimate + NADP(+) = 3-dehydroshikimate + NADPH + H(+). It functions in the pathway metabolic intermediate biosynthesis; chorismate biosynthesis; chorismate from D-erythrose 4-phosphate and phosphoenolpyruvate: step 4/7. Its function is as follows. Involved in the biosynthesis of the chorismate, which leads to the biosynthesis of aromatic amino acids. Catalyzes the reversible NADPH linked reduction of 3-dehydroshikimate (DHSA) to yield shikimate (SA). In Shewanella denitrificans (strain OS217 / ATCC BAA-1090 / DSM 15013), this protein is Shikimate dehydrogenase (NADP(+)).